Reading from the N-terminus, the 182-residue chain is NADH-quinone oxidoreductase subunit I (182 aa).

2 4Fe-4S ferredoxin-type domains span residues 50–82 (IILS…LQKA) and 92–121 (EFFR…MTPD). Residues Cys62, Cys65, Cys68, Cys72, Cys101, Cys104, Cys107, and Cys111 each contribute to the [4Fe-4S] cluster site.

This sequence belongs to the complex I 23 kDa subunit family. As to quaternary structure, NDH-1 is composed of 14 different subunits. Subunits NuoA, H, J, K, L, M, N constitute the membrane sector of the complex. [4Fe-4S] cluster is required as a cofactor.

The protein localises to the cell inner membrane. The enzyme catalyses a quinone + NADH + 5 H(+)(in) = a quinol + NAD(+) + 4 H(+)(out). NDH-1 shuttles electrons from NADH, via FMN and iron-sulfur (Fe-S) centers, to quinones in the respiratory chain. The immediate electron acceptor for the enzyme in this species is believed to be ubiquinone. Couples the redox reaction to proton translocation (for every two electrons transferred, four hydrogen ions are translocated across the cytoplasmic membrane), and thus conserves the redox energy in a proton gradient. This is NADH-quinone oxidoreductase subunit I from Psychrobacter cryohalolentis (strain ATCC BAA-1226 / DSM 17306 / VKM B-2378 / K5).